The chain runs to 156 residues: ATP synthase subunit b (156 aa).

The chain crosses the membrane as a helical span at residues 7–29; sequence LFGQTIAFAIFVWFCMKFVWPPL.

The protein belongs to the ATPase B chain family. In terms of assembly, F-type ATPases have 2 components, F(1) - the catalytic core - and F(0) - the membrane proton channel. F(1) has five subunits: alpha(3), beta(3), gamma(1), delta(1), epsilon(1). F(0) has three main subunits: a(1), b(2) and c(10-14). The alpha and beta chains form an alternating ring which encloses part of the gamma chain. F(1) is attached to F(0) by a central stalk formed by the gamma and epsilon chains, while a peripheral stalk is formed by the delta and b chains.

Its subcellular location is the cell inner membrane. Its function is as follows. F(1)F(0) ATP synthase produces ATP from ADP in the presence of a proton or sodium gradient. F-type ATPases consist of two structural domains, F(1) containing the extramembraneous catalytic core and F(0) containing the membrane proton channel, linked together by a central stalk and a peripheral stalk. During catalysis, ATP synthesis in the catalytic domain of F(1) is coupled via a rotary mechanism of the central stalk subunits to proton translocation. In terms of biological role, component of the F(0) channel, it forms part of the peripheral stalk, linking F(1) to F(0). This is ATP synthase subunit b from Ectopseudomonas mendocina (strain ymp) (Pseudomonas mendocina).